A 282-amino-acid polypeptide reads, in one-letter code: Homeobox protein vex1 (282 aa).

Residues 129-188 constitute a DNA-binding region (homeobox); that stretch reads ASRARTKFTAEQLEELEKSFKENRYIGSSEKRRLSKVLKLSENQIKTWFQNRRMKFKRQT.

Its subcellular location is the nucleus. Functionally, transcriptional repressor. Acts in a ventral signaling pathway downstream of bmp4 to antagonize the Spemann organizer and ventrally pattern the embryonic mesoderm. Represses transcription of the dorsal genes gsc and otx2. The protein is Homeobox protein vex1 of Xenopus tropicalis (Western clawed frog).